Here is a 271-residue protein sequence, read N- to C-terminus: Phosphate import ATP-binding protein PstB 2 (271 aa).

The region spanning 25-266 (MATEDLHVYY…PQQKQTEDYI (242 aa)) is the ABC transporter domain. An ATP-binding site is contributed by 57-64 (GPSGCGKS).

This sequence belongs to the ABC transporter superfamily. Phosphate importer (TC 3.A.1.7) family. As to quaternary structure, the complex is composed of two ATP-binding proteins (PstB), two transmembrane proteins (PstC and PstA) and a solute-binding protein (PstS).

Its subcellular location is the cell membrane. It carries out the reaction phosphate(out) + ATP + H2O = ADP + 2 phosphate(in) + H(+). In terms of biological role, part of the ABC transporter complex PstSACB involved in phosphate import. Responsible for energy coupling to the transport system. This chain is Phosphate import ATP-binding protein PstB 2, found in Listeria monocytogenes serotype 4b (strain F2365).